We begin with the raw amino-acid sequence, 330 residues long: Malate dehydrogenase (330 aa).

Position 15–21 (15–21 (GAGGQIG)) interacts with NAD(+). Substrate-binding residues include arginine 95 and arginine 101. Residues asparagine 108, glutamine 115, and 132–134 (VGN) contribute to the NAD(+) site. 2 residues coordinate substrate: asparagine 134 and arginine 165. The Proton acceptor role is filled by histidine 190.

The protein belongs to the LDH/MDH superfamily. MDH type 2 family.

The catalysed reaction is (S)-malate + NAD(+) = oxaloacetate + NADH + H(+). Catalyzes the reversible oxidation of malate to oxaloacetate. The protein is Malate dehydrogenase of Corynebacterium jeikeium (strain K411).